The following is a 313-amino-acid chain: Undecaprenyl-diphosphatase (313 aa).

6 consecutive transmembrane segments (helical) span residues 121–141 (YRIGWYVIIATIPIGVLGFLF), 152–172 (LWLVSFMLIAFALVIAAAEHY), 187–207 (GLVMGFAQCLALIPGVSRSGA), 225–245 (FSFLLAIPAVTASGLFSLPDA), 259–279 (QLLVATIVSFVVGYASVAWLL), and 290–310 (FVGYRIVLGLVIMGLLGAGVI).

The protein belongs to the UppP family.

The protein localises to the cell membrane. It catalyses the reaction di-trans,octa-cis-undecaprenyl diphosphate + H2O = di-trans,octa-cis-undecaprenyl phosphate + phosphate + H(+). Functionally, catalyzes the dephosphorylation of undecaprenyl diphosphate (UPP). Confers resistance to bacitracin. This is Undecaprenyl-diphosphatase from Nocardia farcinica (strain IFM 10152).